A 211-amino-acid chain; its full sequence is Arginine exporter protein ArgO (211 aa).

The next 6 membrane-spanning stretches (helical) occupy residues 1–21, 37–57, 68–88, 111–131, 147–167, and 179–199; these read MISYYFQGFALGVAMILPLGP, LMIALLCALSDLVLISAGIFG, LLALVTWGGVAFLLWYGFGAL, IIATMLAVTWLNPHVYLDTFV, WFALGTISASFLWFFGLALLA, and AQRIINILVGVVMWLIAFQLA.

It belongs to the LysE/ArgO transporter (TC 2.A.75) family.

The protein localises to the cell inner membrane. The enzyme catalyses L-arginine(in) = L-arginine(out). Involved in the export of arginine. Important to control the intracellular level of arginine and the correct balance between arginine and lysine. The chain is Arginine exporter protein ArgO from Salmonella paratyphi A (strain ATCC 9150 / SARB42).